Reading from the N-terminus, the 100-residue chain is Urease subunit gamma (100 aa).

The protein belongs to the urease gamma subunit family. As to quaternary structure, heterotrimer of UreA (gamma), UreB (beta) and UreC (alpha) subunits. Three heterotrimers associate to form the active enzyme.

The protein resides in the cytoplasm. The enzyme catalyses urea + 2 H2O + H(+) = hydrogencarbonate + 2 NH4(+). Its pathway is nitrogen metabolism; urea degradation; CO(2) and NH(3) from urea (urease route): step 1/1. This Cupriavidus metallidurans (strain ATCC 43123 / DSM 2839 / NBRC 102507 / CH34) (Ralstonia metallidurans) protein is Urease subunit gamma.